Reading from the N-terminus, the 406-residue chain is NADH-quinone oxidoreductase subunit D (406 aa).

It belongs to the complex I 49 kDa subunit family. In terms of assembly, NDH-1 is composed of 14 different subunits. Subunits NuoB, C, D, E, F, and G constitute the peripheral sector of the complex.

The protein resides in the cell inner membrane. It carries out the reaction a quinone + NADH + 5 H(+)(in) = a quinol + NAD(+) + 4 H(+)(out). Its function is as follows. NDH-1 shuttles electrons from NADH, via FMN and iron-sulfur (Fe-S) centers, to quinones in the respiratory chain. The immediate electron acceptor for the enzyme in this species is believed to be ubiquinone. Couples the redox reaction to proton translocation (for every two electrons transferred, four hydrogen ions are translocated across the cytoplasmic membrane), and thus conserves the redox energy in a proton gradient. This is NADH-quinone oxidoreductase subunit D from Leptospira biflexa serovar Patoc (strain Patoc 1 / Ames).